The sequence spans 183 residues: MKLLFPIFASLMLQYQVNTEFIGLRRCLMGLGRCRDHCNVDEKEIQKCKMKKCCVGPKVVKLIKNYLQYGTPNVLNEDVQEMLKPAKNSSAVIQRKHILSVLPQIKSTSFFANTNFVIIPNATPMNSATISTMTPGQITYTATSTKSNTKESRDSATASSPPAPPPPNILPTPSLELEEAEEQ.

The N-terminal stretch at 1 to 19 is a signal peptide; that stretch reads MKLLFPIFASLMLQYQVNT. Intrachain disulfides connect Cys27–Cys53, Cys34–Cys48, and Cys38–Cys54. The segment at 141–183 is disordered; sequence TATSTKSNTKESRDSATASSPPAPPPPNILPTPSLELEEAEEQ. A compositionally biased stretch (pro residues) spans 161–170; it reads PPAPPPPNIL.

This sequence belongs to the beta-defensin family.

The protein localises to the secreted. In terms of biological role, has antibacterial activity. This Gorilla gorilla gorilla (Western lowland gorilla) protein is Beta-defensin 129 (DEFB129).